A 197-amino-acid chain; its full sequence is 7-methyl-GTP pyrophosphatase (197 aa).

Asp-69 (proton acceptor) is an active-site residue.

Belongs to the Maf family. YceF subfamily. A divalent metal cation is required as a cofactor.

It is found in the cytoplasm. It carries out the reaction N(7)-methyl-GTP + H2O = N(7)-methyl-GMP + diphosphate + H(+). Functionally, nucleoside triphosphate pyrophosphatase that hydrolyzes 7-methyl-GTP (m(7)GTP). May have a dual role in cell division arrest and in preventing the incorporation of modified nucleotides into cellular nucleic acids. This is 7-methyl-GTP pyrophosphatase from Pectobacterium atrosepticum (strain SCRI 1043 / ATCC BAA-672) (Erwinia carotovora subsp. atroseptica).